Reading from the N-terminus, the 182-residue chain is Isopentenyl-diphosphate Delta-isomerase (182 aa).

Mn(2+)-binding residues include histidine 25 and histidine 32. In terms of domain architecture, Nudix hydrolase spans 30 to 164 (LLHLAFSSWL…PWAFSPWMVM (135 aa)). Cysteine 67 is a catalytic residue. Cysteine 67 contacts Mg(2+). Histidine 69 provides a ligand contact to Mn(2+). Glutamate 87 contacts Mg(2+). Residues glutamate 114 and glutamate 116 each contribute to the Mn(2+) site. Residue glutamate 116 is part of the active site.

The protein belongs to the IPP isomerase type 1 family. In terms of assembly, homodimer. Requires Mg(2+) as cofactor. It depends on Mn(2+) as a cofactor.

It localises to the cytoplasm. It catalyses the reaction isopentenyl diphosphate = dimethylallyl diphosphate. It participates in isoprenoid biosynthesis; dimethylallyl diphosphate biosynthesis; dimethylallyl diphosphate from isopentenyl diphosphate: step 1/1. Its function is as follows. Catalyzes the 1,3-allylic rearrangement of the homoallylic substrate isopentenyl (IPP) to its highly electrophilic allylic isomer, dimethylallyl diphosphate (DMAPP). The sequence is that of Isopentenyl-diphosphate Delta-isomerase from Shigella boydii serotype 4 (strain Sb227).